Here is a 576-residue protein sequence, read N- to C-terminus: NADH-quinone oxidoreductase subunit C/D (576 aa).

An NADH dehydrogenase I subunit C region spans residues 1-176 (MAWISLEKAK…NLEGLFNYDR (176 aa)). An NADH dehydrogenase I subunit D region spans residues 200–576 (SQIVLNWGPL…IDPVVGETDR (377 aa)).

The protein in the N-terminal section; belongs to the complex I 30 kDa subunit family. It in the C-terminal section; belongs to the complex I 49 kDa subunit family. In terms of assembly, NDH-1 is composed of 13 different subunits. Subunits NuoB, CD, E, F, and G constitute the peripheral sector of the complex.

The protein localises to the cell inner membrane. The enzyme catalyses a quinone + NADH + 5 H(+)(in) = a quinol + NAD(+) + 4 H(+)(out). Its function is as follows. NDH-1 shuttles electrons from NADH, via FMN and iron-sulfur (Fe-S) centers, to quinones in the respiratory chain. The immediate electron acceptor for the enzyme in this species is believed to be ubiquinone. Couples the redox reaction to proton translocation (for every two electrons transferred, four hydrogen ions are translocated across the cytoplasmic membrane), and thus conserves the redox energy in a proton gradient. The protein is NADH-quinone oxidoreductase subunit C/D of Sulfurihydrogenibium sp. (strain YO3AOP1).